A 141-amino-acid chain; its full sequence is Ribonuclease P protein component (141 aa).

2 disordered regions span residues 37 to 56 (RTEE…VGFT) and 114 to 141 (RRIT…VNGK). Residues 114-123 (RRITAKGERR) are compositionally biased toward basic and acidic residues.

This sequence belongs to the RnpA family. In terms of assembly, consists of a catalytic RNA component (M1 or rnpB) and a protein subunit.

It catalyses the reaction Endonucleolytic cleavage of RNA, removing 5'-extranucleotides from tRNA precursor.. RNaseP catalyzes the removal of the 5'-leader sequence from pre-tRNA to produce the mature 5'-terminus. It can also cleave other RNA substrates such as 4.5S RNA. The protein component plays an auxiliary but essential role in vivo by binding to the 5'-leader sequence and broadening the substrate specificity of the ribozyme. This chain is Ribonuclease P protein component, found in Brucella suis biovar 1 (strain 1330).